Here is a 150-residue protein sequence, read N- to C-terminus: Calmodulin-like protein 7 (150 aa).

4 EF-hand domains span residues 1–36, 37–72, 75–110, and 113–148; these read MDPT…LGIY, IPDK…IMDE, EEEE…LGLK, and KTLD…GGFN. Residues D14, N16, D18, T20, E25, D50, N52, D54, C56, E61, D88, N90, D92, E99, D126, D128, D130, R132, and E137 each coordinate Ca(2+).

Belongs to the calmodulin family.

Functionally, potential calcium sensor. The polypeptide is Calmodulin-like protein 7 (CML7) (Arabidopsis thaliana (Mouse-ear cress)).